A 1910-amino-acid chain; its full sequence is C2 domain-containing protein (1910 aa).

The span at 1 to 28 (MMKLKEMVEAAEAKVESKPPQAAEEKAP) shows a compositional bias: basic and acidic residues. 3 disordered regions span residues 1–54 (MMKL…EPLD), 355–377 (AMKLPNRGTRSPSGLESNRPEDG), and 398–428 (LEELPASLRPPLSKRRKGEDKKDGNKADGPQ). Over residues 414–423 (KGEDKKDGNK) the composition is skewed to basic and acidic residues. In terms of domain architecture, C2 spans 557-678 (QLGEVSESDS…FFNEKHNKRN (122 aa)). 2 stretches are compositionally biased toward basic and acidic residues: residues 1192-1205 (LAQKEKQSREDAQR) and 1215-1228 (GHEGADNGAEDKQG). 6 disordered regions span residues 1192–1267 (LAQK…VKKG), 1405–1424 (ATAGEGEQQTSEGIPTRDMQ), 1431–1654 (LEEA…SMGA), 1666–1747 (QRKH…FLSS), 1822–1841 (AKEEKDLIARQPPPARDWSD), and 1879–1910 (DACSRRAESSNESRTTAGAKLRQQQLDLAGRT). Composition is skewed to low complexity over residues 1239–1257 (AAAAAVAEESVSAEAVQGA) and 1405–1414 (ATAGEGEQQT). Residues 1440–1469 (KKKKKKEKKEKKEKKEKKEKKEKKEKKKKK) show a composition bias toward basic residues. Low complexity predominate over residues 1492–1502 (PAAAIPSVLLP). Residues 1517–1526 (KKEKKEKKKK) show a composition bias toward basic residues. A compositionally biased stretch (low complexity) spans 1550-1561 (PAAAIPSILLPA). A compositionally biased stretch (basic and acidic residues) spans 1569–1584 (EKPKEKKTEKKKEKHT). The span at 1595 to 1604 (LPESETTAVV) shows a compositional bias: polar residues. 2 stretches are compositionally biased toward low complexity: residues 1620–1629 (VPSSIASSEA) and 1675–1698 (SSSSSSEVSASSASSLSPSSSSSS). Positions 1701–1711 (AETRAKADALR) are enriched in basic and acidic residues. Composition is skewed to low complexity over residues 1712-1722 (ARLQAAQARLA) and 1729-1747 (VSSSETESSETSEASFLSS). A coiled-coil region spans residues 1766–1828 (QQRLQKMVSG…TRRAKEEKDL (63 aa)). A compositionally biased stretch (polar residues) spans 1890–1904 (ESRTTAGAKLRQQQL).

It localises to the membrane. In terms of biological role, regulates microneme secretion. Probably involved in regulation of rhoptry and dense granule secretion. The protein is C2 domain-containing protein of Toxoplasma gondii.